We begin with the raw amino-acid sequence, 401 residues long: Probable 2,3-bisphosphoglycerate-independent phosphoglycerate mutase (401 aa).

It belongs to the BPG-independent phosphoglycerate mutase family. A-PGAM subfamily.

The catalysed reaction is (2R)-2-phosphoglycerate = (2R)-3-phosphoglycerate. It functions in the pathway carbohydrate degradation; glycolysis; pyruvate from D-glyceraldehyde 3-phosphate: step 3/5. Its function is as follows. Catalyzes the interconversion of 2-phosphoglycerate and 3-phosphoglycerate. This is Probable 2,3-bisphosphoglycerate-independent phosphoglycerate mutase from Thermotoga neapolitana (strain ATCC 49049 / DSM 4359 / NBRC 107923 / NS-E).